Here is a 286-residue protein sequence, read N- to C-terminus: ATP synthase gamma chain (286 aa).

This sequence belongs to the ATPase gamma chain family. In terms of assembly, F-type ATPases have 2 components, CF(1) - the catalytic core - and CF(0) - the membrane proton channel. CF(1) has five subunits: alpha(3), beta(3), gamma(1), delta(1), epsilon(1). CF(0) has three main subunits: a, b and c.

Its subcellular location is the cell inner membrane. Its function is as follows. Produces ATP from ADP in the presence of a proton gradient across the membrane. The gamma chain is believed to be important in regulating ATPase activity and the flow of protons through the CF(0) complex. This chain is ATP synthase gamma chain, found in Pseudomonas putida (strain GB-1).